A 280-amino-acid polypeptide reads, in one-letter code: Energy-coupling factor transporter ATP-binding protein EcfA2 (280 aa).

One can recognise an ABC transporter domain in the interval 3–245; that stretch reads ISLENVSYTY…VAFLKEKQLG (243 aa). ATP is bound at residue 40–47; the sequence is GHTGSGKS.

Belongs to the ABC transporter superfamily. Energy-coupling factor EcfA family. As to quaternary structure, forms a stable energy-coupling factor (ECF) transporter complex composed of 2 membrane-embedded substrate-binding proteins (S component), 2 ATP-binding proteins (A component) and 2 transmembrane proteins (T component).

Its subcellular location is the cell membrane. Functionally, ATP-binding (A) component of a common energy-coupling factor (ECF) ABC-transporter complex. Unlike classic ABC transporters this ECF transporter provides the energy necessary to transport a number of different substrates. The chain is Energy-coupling factor transporter ATP-binding protein EcfA2 from Streptococcus thermophilus (strain CNRZ 1066).